The sequence spans 852 residues: Bifunctional uridylyltransferase/uridylyl-removing enzyme (852 aa).

The interval 1–318 (MPENLSSALE…STPMRVTLRI (318 aa)) is uridylyltransferase. The segment at 319–672 (DDDYIQVNNQ…SRILPQSDSF (354 aa)) is uridylyl-removing. One can recognise an HD domain in the interval 436-558 (VDDHILAVVR…VQTHERLSAL (123 aa)). ACT domains lie at 673-757 (QVMV…SCNR) and 785-852 (SVEI…EQLA).

Belongs to the GlnD family. Mg(2+) serves as cofactor.

It catalyses the reaction [protein-PII]-L-tyrosine + UTP = [protein-PII]-uridylyl-L-tyrosine + diphosphate. The enzyme catalyses [protein-PII]-uridylyl-L-tyrosine + H2O = [protein-PII]-L-tyrosine + UMP + H(+). With respect to regulation, uridylyltransferase (UTase) activity is inhibited by glutamine, while glutamine activates uridylyl-removing (UR) activity. Its function is as follows. Modifies, by uridylylation and deuridylylation, the PII regulatory proteins (GlnB and homologs), in response to the nitrogen status of the cell that GlnD senses through the glutamine level. Under low glutamine levels, catalyzes the conversion of the PII proteins and UTP to PII-UMP and PPi, while under higher glutamine levels, GlnD hydrolyzes PII-UMP to PII and UMP (deuridylylation). Thus, controls uridylylation state and activity of the PII proteins, and plays an important role in the regulation of nitrogen assimilation and metabolism. The chain is Bifunctional uridylyltransferase/uridylyl-removing enzyme from Neisseria gonorrhoeae (strain NCCP11945).